A 29-amino-acid chain; its full sequence is Cytochrome b6-f complex subunit 8 (29 aa).

A helical membrane pass occupies residues 3-23 (ILALGWVSVLALFTWSIAMVV).

Belongs to the PetN family. The 4 large subunits of the cytochrome b6-f complex are cytochrome b6, subunit IV (17 kDa polypeptide, PetD), cytochrome f and the Rieske protein, while the 4 small subunits are PetG, PetL, PetM and PetN. The complex functions as a dimer.

The protein localises to the cellular thylakoid membrane. Its function is as follows. Component of the cytochrome b6-f complex, which mediates electron transfer between photosystem II (PSII) and photosystem I (PSI), cyclic electron flow around PSI, and state transitions. The sequence is that of Cytochrome b6-f complex subunit 8 from Gloeothece citriformis (strain PCC 7424) (Cyanothece sp. (strain PCC 7424)).